The sequence spans 409 residues: Argininosuccinate synthase (409 aa).

Residue 10–18 coordinates ATP; sequence AYSGGLDTS. Position 87 (tyrosine 87) interacts with L-citrulline. Glycine 117 is a binding site for ATP. L-aspartate is bound by residues threonine 119, asparagine 123, and aspartate 124. Asparagine 123 is a binding site for L-citrulline. Residues arginine 127, serine 175, serine 184, glutamate 260, and tyrosine 272 each contribute to the L-citrulline site.

It belongs to the argininosuccinate synthase family. Type 1 subfamily. Homotetramer.

It localises to the cytoplasm. The catalysed reaction is L-citrulline + L-aspartate + ATP = 2-(N(omega)-L-arginino)succinate + AMP + diphosphate + H(+). It functions in the pathway amino-acid biosynthesis; L-arginine biosynthesis; L-arginine from L-ornithine and carbamoyl phosphate: step 2/3. The protein is Argininosuccinate synthase of Rubrobacter xylanophilus (strain DSM 9941 / JCM 11954 / NBRC 16129 / PRD-1).